The primary structure comprises 330 residues: Tryptophan--tRNA ligase (330 aa).

ATP is bound by residues 10 to 12 (QTT) and 18 to 19 (GN). Residues 11–19 (TTGALHLGN) carry the 'HIGH' region motif. Asp-134 is a binding site for L-tryptophan. Residues 146-148 (GED), Ile-186, and 195-199 (KMSKS) each bind ATP. Positions 195–199 (KMSKS) match the 'KMSKS' region motif.

The protein belongs to the class-I aminoacyl-tRNA synthetase family. Homodimer.

It localises to the cytoplasm. It catalyses the reaction tRNA(Trp) + L-tryptophan + ATP = L-tryptophyl-tRNA(Trp) + AMP + diphosphate + H(+). Functionally, catalyzes the attachment of tryptophan to tRNA(Trp). The chain is Tryptophan--tRNA ligase from Rickettsia prowazekii (strain Madrid E).